The sequence spans 287 residues: Hydroxysteroid 11-beta-dehydrogenase 1-like protein (287 aa).

The first 20 residues, 1 to 20 (MMKPFGKVLCAAGSLAVLLA), serve as a signal peptide directing secretion. NADP(+)-binding positions include 41–67 (GASA…TARR), 92–93 (DM), and 119–121 (NHI). Ser170 contacts substrate. Catalysis depends on Tyr183, which acts as the Proton acceptor. NADP(+) contacts are provided by residues 183–187 (YSATK) and 216–222 (GLIDTDA).

The protein belongs to the short-chain dehydrogenases/reductases (SDR) family.

The protein resides in the secreted. The catalysed reaction is cortisone + NADPH + H(+) = cortisol + NADP(+). Its function is as follows. Unidirectional NADP(+)-dependent cortisol dehydrogenase (in vitro). The sequence is that of Hydroxysteroid 11-beta-dehydrogenase 1-like protein (HSD11B1L) from Gallus gallus (Chicken).